We begin with the raw amino-acid sequence, 417 residues long: Inhibitor of growth protein 3 (417 aa).

2 disordered regions span residues Thr128–Asn203 and Gln286–Ser320. The segment covering His136–Ser152 has biased composition (basic residues). Positions Gly156 to Ser168 are enriched in basic and acidic residues. Low complexity-rich tracts occupy residues Asn189–Asn203, Gln286–Ser295, and Ser307–Ser320. The PHD-type zinc-finger motif lies at Pro359 to Ala408. Zn(2+)-binding residues include Cys362, Cys364, Cys375, Cys380, His386, Cys389, Cys402, and Cys405.

It belongs to the ING family. As to quaternary structure, interacts with H3K4me3 and to a lesser extent with H3K4me2. Component of the NuA4 histone acetyltransferase complex.

It is found in the nucleus. Its function is as follows. Component of the NuA4 histone acetyltransferase (HAT) complex which is involved in transcriptional activation of select genes principally by acetylation of nucleosomal histone H4 and H2A. This modification may both alter nucleosome - DNA interactions and promote interaction of the modified histones with other proteins which positively regulate transcription. NuA4 may also play a direct role in DNA repair when directly recruited to sites of DNA damage. This is Inhibitor of growth protein 3 (ING3) from Gallus gallus (Chicken).